Consider the following 201-residue polypeptide: Holliday junction branch migration complex subunit RuvA (201 aa).

The interval 1–63 (MIGCLIGEVF…EDAQQLYGFI (63 aa)) is domain I. The tract at residues 64–142 (DAQEKLIFRT…ALSVQATTGS (79 aa)) is domain II. Residues 143–152 (TVTSAQIQFS) form a flexible linker region. The tract at residues 152–201 (SSNSPIAEAEAALQSLGYKPIEAQKAIAAVKADYTEAADLIRAALKSMMK) is domain III.

Belongs to the RuvA family. In terms of assembly, homotetramer. Forms an RuvA(8)-RuvB(12)-Holliday junction (HJ) complex. HJ DNA is sandwiched between 2 RuvA tetramers; dsDNA enters through RuvA and exits via RuvB. An RuvB hexamer assembles on each DNA strand where it exits the tetramer. Each RuvB hexamer is contacted by two RuvA subunits (via domain III) on 2 adjacent RuvB subunits; this complex drives branch migration. In the full resolvosome a probable DNA-RuvA(4)-RuvB(12)-RuvC(2) complex forms which resolves the HJ.

It localises to the cytoplasm. Functionally, the RuvA-RuvB-RuvC complex processes Holliday junction (HJ) DNA during genetic recombination and DNA repair, while the RuvA-RuvB complex plays an important role in the rescue of blocked DNA replication forks via replication fork reversal (RFR). RuvA specifically binds to HJ cruciform DNA, conferring on it an open structure. The RuvB hexamer acts as an ATP-dependent pump, pulling dsDNA into and through the RuvAB complex. HJ branch migration allows RuvC to scan DNA until it finds its consensus sequence, where it cleaves and resolves the cruciform DNA. This Acinetobacter baylyi (strain ATCC 33305 / BD413 / ADP1) protein is Holliday junction branch migration complex subunit RuvA.